Reading from the N-terminus, the 532-residue chain is Glucan synthesis regulatory protein (532 aa).

A disordered region spans residues 374-532; it reads TANKRKSMAP…DAEDMKDIEI (159 aa). Low complexity predominate over residues 381–393; that stretch reads MAPSMASASGMRS. The span at 447–457 shows a compositional bias: polar residues; the sequence is PTTSLTASNAS. Positions 475–516 are enriched in basic and acidic residues; sequence SGEHSKEDIKVNEDSPAKERTSEDKEKKPETEANGKATESKG.

It belongs to the KNR4/SMI1 family.

Its function is as follows. Involved in the regulation of 1,3-beta-glucan synthase activity and cell-wall formation. The polypeptide is Glucan synthesis regulatory protein (cot-2) (Neurospora crassa (strain ATCC 24698 / 74-OR23-1A / CBS 708.71 / DSM 1257 / FGSC 987)).